A 497-amino-acid chain; its full sequence is tRNA (adenine(58)-N(1))-methyltransferase non-catalytic subunit TRM6 (497 aa).

Disordered stretches follow at residues 1-20 and 69-100; these read MEGS…DHRI and TSGG…IVDD. The segment covering 79–100 has biased composition (basic and acidic residues); that stretch reads KREEPTAETKEAGTDNRNIVDD. 94–104 lines the substrate pocket; it reads NRNIVDDGKSQ. Residue threonine 107 is modified to Phosphothreonine. Substrate contacts are provided by residues 145–154 and 175–182; these read KYIKKKKKKY and REPGKINH. The tract at residues 276–354 is disordered; it reads SSEPKDSALV…EKQRRQEEQR (79 aa). Phosphoserine is present on residues serine 298 and serine 305. The segment covering 327–354 has biased composition (basic and acidic residues); it reads DPEHKGPKERGSKKDYIQEKQRRQEEQR. Substrate contacts are provided by residues arginine 349, arginine 377, 415–423, and 434–441; these read RERGGVINL and QVLPDRSH. The segment at 472-497 is disordered; the sequence is SNASTLESHETEEPAAKKRKCPESDS. The segment covering 478–497 has biased composition (basic and acidic residues); it reads ESHETEEPAAKKRKCPESDS.

This sequence belongs to the TRM6/GCD10 family. In terms of assembly, heterotetramer; composed of two copies of TRMT6 and two copies of TRMT61A. In terms of tissue distribution, expressed in brain, liver, testis and ovary.

It is found in the nucleus. Its function is as follows. Substrate-binding subunit of tRNA (adenine-N(1)-)-methyltransferase, which catalyzes the formation of N(1)-methyladenine at position 58 (m1A58) in initiator methionyl-tRNA. Together with the TRMT61A catalytic subunit, part of a mRNA N(1)-methyltransferase complex that mediates methylation of adenosine residues at the N(1) position of a small subset of mRNAs: N(1) methylation takes place in tRNA T-loop-like structures of mRNAs and is only present at low stoichiometries. The sequence is that of tRNA (adenine(58)-N(1))-methyltransferase non-catalytic subunit TRM6 (TRMT6) from Homo sapiens (Human).